Consider the following 155-residue polypeptide: 6,7-dimethyl-8-ribityllumazine synthase (155 aa).

5-amino-6-(D-ribitylamino)uracil-binding positions include Phe23, 57–59, and 81–83; these read AFE and AVI. 86-87 serves as a coordination point for (2S)-2-hydroxy-3-oxobutyl phosphate; the sequence is AT. Catalysis depends on His89, which acts as the Proton donor. Phe114 lines the 5-amino-6-(D-ribitylamino)uracil pocket. Arg128 is a (2S)-2-hydroxy-3-oxobutyl phosphate binding site.

Belongs to the DMRL synthase family.

It carries out the reaction (2S)-2-hydroxy-3-oxobutyl phosphate + 5-amino-6-(D-ribitylamino)uracil = 6,7-dimethyl-8-(1-D-ribityl)lumazine + phosphate + 2 H2O + H(+). The protein operates within cofactor biosynthesis; riboflavin biosynthesis; riboflavin from 2-hydroxy-3-oxobutyl phosphate and 5-amino-6-(D-ribitylamino)uracil: step 1/2. Its function is as follows. Catalyzes the formation of 6,7-dimethyl-8-ribityllumazine by condensation of 5-amino-6-(D-ribitylamino)uracil with 3,4-dihydroxy-2-butanone 4-phosphate. This is the penultimate step in the biosynthesis of riboflavin. The sequence is that of 6,7-dimethyl-8-ribityllumazine synthase from Geotalea uraniireducens (strain Rf4) (Geobacter uraniireducens).